The chain runs to 348 residues: Adenosine deaminase (348 aa).

Residues His16 and His18 each coordinate Zn(2+). Residues His18, Asp20, and Gly174 each coordinate substrate. His201 serves as a coordination point for Zn(2+). Glu204 (proton donor) is an active-site residue. Asp282 serves as a coordination point for Zn(2+).

It belongs to the metallo-dependent hydrolases superfamily. Adenosine and AMP deaminases family. Adenosine deaminase subfamily. The cofactor is Zn(2+).

It catalyses the reaction adenosine + H2O + H(+) = inosine + NH4(+). It carries out the reaction 2'-deoxyadenosine + H2O + H(+) = 2'-deoxyinosine + NH4(+). Functionally, catalyzes the hydrolytic deamination of adenosine and 2-deoxyadenosine. This is Adenosine deaminase from Clostridium kluyveri (strain ATCC 8527 / DSM 555 / NBRC 12016 / NCIMB 10680 / K1).